The sequence spans 878 residues: Phosphoenolpyruvate carboxylase (878 aa).

Active-site residues include His137 and Lys545.

It belongs to the PEPCase type 1 family. The cofactor is Mg(2+).

The enzyme catalyses oxaloacetate + phosphate = phosphoenolpyruvate + hydrogencarbonate. Its function is as follows. Forms oxaloacetate, a four-carbon dicarboxylic acid source for the tricarboxylic acid cycle. This Yersinia pseudotuberculosis serotype O:1b (strain IP 31758) protein is Phosphoenolpyruvate carboxylase.